The primary structure comprises 327 residues: Phenylalanine--tRNA ligase alpha subunit (327 aa).

Residue E252 participates in Mg(2+) binding.

It belongs to the class-II aminoacyl-tRNA synthetase family. Phe-tRNA synthetase alpha subunit type 1 subfamily. In terms of assembly, tetramer of two alpha and two beta subunits. The cofactor is Mg(2+).

Its subcellular location is the cytoplasm. The enzyme catalyses tRNA(Phe) + L-phenylalanine + ATP = L-phenylalanyl-tRNA(Phe) + AMP + diphosphate + H(+). The sequence is that of Phenylalanine--tRNA ligase alpha subunit from Cronobacter sakazakii (strain ATCC BAA-894) (Enterobacter sakazakii).